The primary structure comprises 111 residues: Rubredoxin (111 aa).

The Rubredoxin-like domain maps to 11–62 (LDRFECRSCGYVYEPEKGDNKHDIAPETPFAELPINWRCPVCTAKKAAFTNI). C16, C19, C49, and C52 together coordinate Fe cation.

Belongs to the rubredoxin family. Fe(3+) is required as a cofactor.

In terms of biological role, rubredoxin is a small nonheme, iron protein lacking acid-labile sulfide. Its single Fe, chelated to 4 Cys, functions as an electron acceptor and may also stabilize the conformation of the molecule. Could be involved in hydrogenase-linked redox processes. This Nostoc sp. (strain PCC 7120 / SAG 25.82 / UTEX 2576) protein is Rubredoxin (rub).